The primary structure comprises 78 residues: Acyl carrier protein (78 aa).

The region spanning 2–77 (STIEERVKKI…AAIDYVTSHQ (76 aa)) is the Carrier domain. Ser37 is modified (O-(pantetheine 4'-phosphoryl)serine).

It belongs to the acyl carrier protein (ACP) family. Post-translationally, 4'-phosphopantetheine is transferred from CoA to a specific serine of apo-ACP by AcpS. This modification is essential for activity because fatty acids are bound in thioester linkage to the sulfhydryl of the prosthetic group.

The protein resides in the cytoplasm. It functions in the pathway lipid metabolism; fatty acid biosynthesis. Functionally, carrier of the growing fatty acid chain in fatty acid biosynthesis. The protein is Acyl carrier protein of Pseudomonas fluorescens (strain SBW25).